The chain runs to 231 residues: Coproheme decarboxylase (231 aa).

Residue Lys-44 forms an Isoglutamyl lysine isopeptide (Lys-Gln) (interchain with Q-Cter in protein Pup) linkage. Residue Tyr-133 is part of the active site. His-156 contributes to the Fe-coproporphyrin III binding site.

The protein belongs to the ChdC family. Type 2 subfamily. It depends on Fe-coproporphyrin III as a cofactor.

The catalysed reaction is Fe-coproporphyrin III + 2 H2O2 + 2 H(+) = heme b + 2 CO2 + 4 H2O. It carries out the reaction Fe-coproporphyrin III + H2O2 + H(+) = harderoheme III + CO2 + 2 H2O. It catalyses the reaction harderoheme III + H2O2 + H(+) = heme b + CO2 + 2 H2O. Its pathway is porphyrin-containing compound metabolism; protoheme biosynthesis. Functionally, involved in coproporphyrin-dependent heme b biosynthesis. Catalyzes the decarboxylation of Fe-coproporphyrin III (coproheme) to heme b (protoheme IX), the last step of the pathway. The reaction occurs in a stepwise manner with a three-propionate intermediate. In Mycolicibacterium smegmatis (strain ATCC 700084 / mc(2)155) (Mycobacterium smegmatis), this protein is Coproheme decarboxylase.